The chain runs to 495 residues: Putative aldehyde dehydrogenase DhaS (495 aa).

244 to 249 provides a ligand contact to NAD(+); that stretch reads GSTEIG. Active-site residues include Glu-266 and Cys-300.

This sequence belongs to the aldehyde dehydrogenase family.

It catalyses the reaction an aldehyde + NAD(+) + H2O = a carboxylate + NADH + 2 H(+). This is Putative aldehyde dehydrogenase DhaS (dhaS) from Bacillus subtilis (strain 168).